The sequence spans 302 residues: Protein transport protein SEC13 homolog A (302 aa).

WD repeat units lie at residues 9–48 (GHSD…GSQH), 54–95 (GHRG…QWTQ), 101–142 (DHKV…GWDT), 148–201 (AHPV…WKMD), 208–251 (KHTD…EQWE), and 257–296 (DFKT…EWEQ).

This sequence belongs to the WD repeat SEC13 family. As to quaternary structure, interacts with MAG5, SEC31A and SEC31B.

The protein localises to the golgi apparatus. The protein resides in the endoplasmic reticulum. Functionally, required for protein transport from the endoplasmic reticulum to the Golgi apparatus. The chain is Protein transport protein SEC13 homolog A from Arabidopsis thaliana (Mouse-ear cress).